The chain runs to 916 residues: DNA mismatch repair protein MutS (916 aa).

The disordered stretch occupies residues 1–47 (MSEALSVPAAEGENTVTASESPDLAATSARAEKVGKQEKPEKAEKQS). Residues 30–45 (RAEKVGKQEKPEKAEK) show a composition bias toward basic and acidic residues. 656–663 (GPNMGGKS) is an ATP binding site. A compositionally biased stretch (polar residues) spans 843–861 (ADATPTPQMDLFSAQSSPS). Residues 843–880 (ADATPTPQMDLFSAQSSPSADDEDDKSAGQSAVPPAQA) form a disordered region.

The protein belongs to the DNA mismatch repair MutS family.

Its function is as follows. This protein is involved in the repair of mismatches in DNA. It is possible that it carries out the mismatch recognition step. This protein has a weak ATPase activity. In Cupriavidus metallidurans (strain ATCC 43123 / DSM 2839 / NBRC 102507 / CH34) (Ralstonia metallidurans), this protein is DNA mismatch repair protein MutS.